The primary structure comprises 221 residues: ATP phosphoribosyltransferase (221 aa).

Belongs to the ATP phosphoribosyltransferase family. Short subfamily. As to quaternary structure, heteromultimer composed of HisG and HisZ subunits.

It localises to the cytoplasm. It catalyses the reaction 1-(5-phospho-beta-D-ribosyl)-ATP + diphosphate = 5-phospho-alpha-D-ribose 1-diphosphate + ATP. Its pathway is amino-acid biosynthesis; L-histidine biosynthesis; L-histidine from 5-phospho-alpha-D-ribose 1-diphosphate: step 1/9. Functionally, catalyzes the condensation of ATP and 5-phosphoribose 1-diphosphate to form N'-(5'-phosphoribosyl)-ATP (PR-ATP). Has a crucial role in the pathway because the rate of histidine biosynthesis seems to be controlled primarily by regulation of HisG enzymatic activity. This is ATP phosphoribosyltransferase from Anaeromyxobacter sp. (strain K).